Consider the following 142-residue polypeptide: Transmembrane protein 170A (142 aa).

Topologically, residues 1-48 (MEGGGGGLGGEPGLLQQILSLRLVPRVGNVTDCQRATLCSFPEMWYGV) are lumenal. N-linked (GlcNAc...) asparagine glycosylation is present at Asn-29. Residues 49 to 69 (FLWALVSSLFFHIPAGLLALF) form a helical membrane-spanning segment. Topologically, residues 70 to 78 (TLRHHKYGR) are cytoplasmic. Residues 79 to 99 (FMSVGIFLMGVLGPISAGILT) traverse the membrane as a helical segment. Over 100-114 (SAAIAGVYKAAGKEM) the chain is Lumenal. A helical transmembrane segment spans residues 115–135 (IPFEALVLGVGQTFCVLIVSF). Residues 136–142 (LRILATL) are Cytoplasmic-facing.

The protein belongs to the TMEM170 family.

The protein resides in the endoplasmic reticulum membrane. Its subcellular location is the nucleus envelope. Functionally, may regulate membrane morphogenesis in the endoplasmic reticulum (ER) by promoting ER sheet formation at the expense of ER tubules. In Xenopus laevis (African clawed frog), this protein is Transmembrane protein 170A (tmem170a).